Reading from the N-terminus, the 200-residue chain is NADH-quinone oxidoreductase subunit C (200 aa).

The protein belongs to the complex I 30 kDa subunit family. In terms of assembly, NDH-1 is composed of 14 different subunits. Subunits NuoB, C, D, E, F, and G constitute the peripheral sector of the complex.

It localises to the cell inner membrane. It carries out the reaction a quinone + NADH + 5 H(+)(in) = a quinol + NAD(+) + 4 H(+)(out). NDH-1 shuttles electrons from NADH, via FMN and iron-sulfur (Fe-S) centers, to quinones in the respiratory chain. The immediate electron acceptor for the enzyme in this species is believed to be ubiquinone. Couples the redox reaction to proton translocation (for every two electrons transferred, four hydrogen ions are translocated across the cytoplasmic membrane), and thus conserves the redox energy in a proton gradient. In Rhizobium rhizogenes (strain K84 / ATCC BAA-868) (Agrobacterium radiobacter), this protein is NADH-quinone oxidoreductase subunit C.